Here is a 321-residue protein sequence, read N- to C-terminus: Gap junction delta-2 protein (321 aa).

Residues 1 to 19 (MGEWTILERLLEAAVQQHS) are Cytoplasmic-facing. A helical transmembrane segment spans residues 20–42 (TMIGRILLTVVVIFRILIVAIVG). The Extracellular segment spans residues 43–75 (ETVYDDEQTMFVCNTLQPGCNQACYDRAFPISH). Residues 76 to 98 (IRYWVFQIIMVCTPSLCFITYSV) form a helical membrane-spanning segment. Residues 99–197 (HQSAKQRERR…KLRRQEGISR (99 aa)) are Cytoplasmic-facing. The segment at 120-141 (PAESIGGPGGTGGGGSGGSKRE) is disordered. Over residues 125 to 137 (GGPGGTGGGGSGG) the composition is skewed to gly residues. A helical membrane pass occupies residues 198–220 (FYIIQVVFRNALEIGFLVGQYFL). Residues 221–252 (YGFSVPGLYECNRYPCIKEVECYVSRPTEKTV) are Extracellular-facing. The chain crosses the membrane as a helical span at residues 253 to 275 (FLVFMFAVSGICVVLNLAELNHL). Topologically, residues 276 to 321 (GWRKIKLAVRGAQAKRKSVYEIRNKDLPRVSVPNFGRTQSSDSAYV) are cytoplasmic.

Belongs to the connexin family. Delta-type subfamily. In terms of assembly, a connexon is composed of a hexamer of connexins. Highly expressed in neurons.

It is found in the cell membrane. The protein resides in the cell junction. Its subcellular location is the gap junction. One gap junction consists of a cluster of closely packed pairs of transmembrane channels, the connexons, through which materials of low MW diffuse from one cell to a neighboring cell. In Mus musculus (Mouse), this protein is Gap junction delta-2 protein (Gjd2).